A 150-amino-acid chain; its full sequence is uncharacterized protein (150 aa).

5 repeat units span residues 101–105 (FHEVN), 106–110 (HHEVN), 111–115 (HHKIN), 116–120 (HHEVN), and 121–125 (HHKIN). The tract at residues 101–125 (FHEVNHHEVNHHKINHHEVNHHKIN) is 5 X 5 AA tandem repeats of [FH]-H-[EK]-[IV]-N.

This sequence belongs to the asfivirus D129L family.

This is an uncharacterized protein from African swine fever virus (isolate Tick/Malawi/Lil 20-1/1983) (ASFV).